A 455-amino-acid polypeptide reads, in one-letter code: Beta-1,4-mannosyltransferase bre-3 (455 aa).

Belongs to the glycosyltransferase 2 family. Endothelial cells.

It is found in the cytoplasm. It functions in the pathway protein modification; protein glycosylation. Functionally, glycosyltransferase with a proposed role in glycosphingolipid biosynthesis. Involved in susceptibility to pore-forming crystal toxins in conjunction with bre-1, bre-2, bre-4 and bre-5. Involved in resistance to the nematotoxic C.cinerea galectin Cgl2. Has a role in determining brood size. In Caenorhabditis elegans, this protein is Beta-1,4-mannosyltransferase bre-3 (bre-3).